Here is a 132-residue protein sequence, read N- to C-terminus: Small ribosomal subunit protein uS8 (132 aa).

This sequence belongs to the universal ribosomal protein uS8 family. In terms of assembly, part of the 30S ribosomal subunit. Contacts proteins S5 and S12.

In terms of biological role, one of the primary rRNA binding proteins, it binds directly to 16S rRNA central domain where it helps coordinate assembly of the platform of the 30S subunit. The polypeptide is Small ribosomal subunit protein uS8 (Brucella anthropi (strain ATCC 49188 / DSM 6882 / CCUG 24695 / JCM 21032 / LMG 3331 / NBRC 15819 / NCTC 12168 / Alc 37) (Ochrobactrum anthropi)).